We begin with the raw amino-acid sequence, 160 residues long: Triabin (160 aa).

The N-terminal stretch at 1–18 (MKTIIAVTIFGILTCAYA) is a signal peptide. Cystine bridges form between Cys-24–Cys-128, Cys-57–Cys-160, and Cys-87–Cys-102.

It belongs to the calycin superfamily. Triabin family. Expressed in salivary glands.

Its subcellular location is the secreted. Thrombin inhibitor. Forms a non-covalent complex with thrombin at a molar ratio of 1:1. Inhibits thrombin-induced platelet aggregation. Prolongs thrombin clotting time and activated partial thromboplastin time. It only minimally suppresses the amidolytic activity of thrombin. Inhibits thrombin-mediated fibrin formation in the host. Inhibits thrombin-induced endothelium-dependent relaxant and contractile responses in host blood vessels. Inhibits thrombin-induced mitogenesis in host vascular smooth muscle cells. The polypeptide is Triabin (Meccus pallidipennis (Triatomine bug)).